A 1493-amino-acid polypeptide reads, in one-letter code: Mitogen-activated protein kinase kinase kinase 1 (1493 aa).

Positions 1–23 (MAAAAGDRASSSGFPGAAAASPE) are enriched in low complexity. Disordered stretches follow at residues 1–178 (MAAA…PEER) and 194–300 (HEWL…EETS). Residue Ala2 is modified to N-acetylalanine. A Phosphoserine modification is found at Ser21. A compositionally biased stretch (gly residues) spans 24-35 (AGGGGGGGGALQ). The segment covering 36–46 (GSGAPAAGAAG) has biased composition (low complexity). Positions 89–99 (PPCPSTSPSPE) are enriched in pro residues. Low complexity predominate over residues 140–156 (ARSPAGAEPPSAAAPSG). At Ser142 the chain carries Phosphoserine. A compositionally biased stretch (basic and acidic residues) spans 157-178 (REMENKETLKGLHKMEDRPEER). Residues 235–256 (SAAPAPKGRRSPSPGSSPSGRS) show a composition bias toward low complexity. At Ser270 the chain carries Phosphoserine. Thr280 carries the post-translational modification Phosphothreonine. Residues Ser287, Ser292, and Ser295 each carry the phosphoserine modification. The SWIM-type zinc-finger motif lies at 333–361 (YRVFIGPQNCSCGRGAFCIHLLFVMLRVF). Positions 411–428 (SNSHTLSSSSTSTSSSEN) are enriched in low complexity. The interval 411–431 (SNSHTLSSSSTSTSSSENSIK) is disordered. Residues 438–487 (CPICLLGMLDEESLTVCEDGCRNKLHHHCMSIWAEECRRNREPLICPLCR) form an RING-type zinc finger. Phosphoserine occurs at positions 502 and 526. Disordered stretches follow at residues 506–531 (SPASLRAVQQPSSPQQPVAGSQRRNQ) and 895–914 (EHTVHREKTGKGLSATRLSA). The span at 512 to 527 (AVQQPSSPQQPVAGSQ) shows a compositional bias: low complexity. Ser915 is modified (phosphoserine). Disordered regions lie at residues 927-957 (SVGLPSSTTTEQPKPAVQTKGRPHSQCLNSS) and 992-1066 (PCKI…TLDL). Residues 998–1013 (ASPQTQRKFSLQFQRN) show a composition bias toward polar residues. Phosphoserine occurs at positions 999 and 1024. A compositionally biased stretch (polar residues) spans 1049 to 1063 (GSTSKLGDATKSSMT). One can recognise a Protein kinase domain in the interval 1224 to 1489 (WLKGQQIGLG…SRELLKHPVF (266 aa)). Residues 1230–1238 (IGLGAFSSC) and Lys1253 each bind ATP. Asp1350 acts as the Proton acceptor in catalysis. Thr1381 and Thr1393 each carry phosphothreonine; by autocatalysis.

The protein belongs to the protein kinase superfamily. STE Ser/Thr protein kinase family. MAP kinase kinase kinase subfamily. As to quaternary structure, binds both upstream activators and downstream substrates in multimolecular complexes through its N-terminus. Oligomerizes after binding MAP4K2 or TRAF2. Interacts with AXIN1. Interacts (via the kinase catalytic domain) with STK38. Interacts with GRIPAP1. The cofactor is Mg(2+). Autophosphorylated. In terms of tissue distribution, highly expressed in the heart and spleen while a lower level expression is seen in the liver.

The catalysed reaction is L-seryl-[protein] + ATP = O-phospho-L-seryl-[protein] + ADP + H(+). It carries out the reaction L-threonyl-[protein] + ATP = O-phospho-L-threonyl-[protein] + ADP + H(+). Its activity is regulated as follows. Activated by autophosphorylation on Thr-1381 and Thr-1393 following oligomerization. Its function is as follows. Component of a protein kinase signal transduction cascade. Activates the ERK and JNK kinase pathways by phosphorylation of MAP2K1 and MAP2K4. May phosphorylate the MAPK8/JNK1 kinase. Activates CHUK and IKBKB, the central protein kinases of the NF-kappa-B pathway. This is Mitogen-activated protein kinase kinase kinase 1 (Map3k1) from Mus musculus (Mouse).